Consider the following 340-residue polypeptide: UPF0324 membrane protein BA_5405/GBAA_5405/BAS5024 (340 aa).

The next 10 membrane-spanning stretches (helical) occupy residues 13–35 (FGFS…LAEL), 40–59 (IMGQ…AAIG), 99–118 (VLVI…YGLT), 128–150 (GILT…APQV), 157–179 (TAVG…TLLY), 189–211 (YGVF…APGG), 218–240 (AVIV…GVWF), 255–277 (LPIP…GIIP), 279–301 (VVAG…GLGL), and 316–338 (FVAG…YALG).

Belongs to the UPF0324 family.

It localises to the cell membrane. This Bacillus anthracis protein is UPF0324 membrane protein BA_5405/GBAA_5405/BAS5024.